The sequence spans 556 residues: Glutamine--tRNA ligase (556 aa).

The 'HIGH' region signature appears at 34 to 44 (PEPNGYLHIGH). Residues 35–37 (EPN) and 41–47 (HIGHAKS) contribute to the ATP site. L-glutamine contacts are provided by aspartate 67 and tyrosine 212. ATP contacts are provided by residues threonine 231, 263-264 (RL), and 271-273 (MSK). The short motif at 270–274 (VMSKR) is the 'KMSKS' region element.

This sequence belongs to the class-I aminoacyl-tRNA synthetase family. In terms of assembly, monomer.

The protein resides in the cytoplasm. The catalysed reaction is tRNA(Gln) + L-glutamine + ATP = L-glutaminyl-tRNA(Gln) + AMP + diphosphate. The chain is Glutamine--tRNA ligase from Nitrosomonas europaea (strain ATCC 19718 / CIP 103999 / KCTC 2705 / NBRC 14298).